The chain runs to 222 residues: FCS-Like Zinc finger 13 (222 aa).

The FLZ-type zinc finger occupies 149–192; it reads EFLSSCCLCKKKLQGKDIYMYKGEMGFCSAECRSVQIMNDERQE.

It belongs to the FLZ family. As to quaternary structure, interacts with KIN10 and KIN11 via its FLZ-type zinc finger domain. Interacts with KINB1, KINB2, KINB3 and SNF4 via its N-terminal part.

Its subcellular location is the nucleus. The protein resides in the cytoplasm. May act as an adapter to facilitate the interaction of SnRK1 complex with effector proteins, conferring tissue- and stimulus-type specific differences in the SnRK1 regulation pathway. The sequence is that of FCS-Like Zinc finger 13 from Arabidopsis thaliana (Mouse-ear cress).